Reading from the N-terminus, the 126-residue chain is uncharacterized protein (126 aa).

2 stretches are compositionally biased toward basic residues: residues 21–31 and 41–83; these read RKKRKKRKKRR and RILK…RKRR. The interval 21-83 is disordered; it reads RKKRKKRKKR…RSPRKRRKRR (63 aa).

This is an uncharacterized protein from Saccharomyces cerevisiae (strain ATCC 204508 / S288c) (Baker's yeast).